Consider the following 419-residue polypeptide: F-box/FBD/LRR-repeat protein At4g26340 (419 aa).

Residues M1–G53 form the F-box domain. LRR repeat units follow at residues Y55–L81, T132–T159, V160–R185, D187–D208, Y226–I253, T254–S284, and V299–D324. Residues G339 to P389 form the FBD domain.

The sequence is that of F-box/FBD/LRR-repeat protein At4g26340 from Arabidopsis thaliana (Mouse-ear cress).